A 595-amino-acid chain; its full sequence is Apolipoprotein N-acyltransferase 2 (595 aa).

5 consecutive transmembrane segments (helical) span residues 30-50 (FLAFAPVSLTHFVWIAPFGFF), 63-83 (LFFHGLLIGVVFYAISFHWII), 95-115 (VVAILILLFAGLLFGLKFPIF), 167-187 (AEITGVYGISFLVFIVSYTLF), and 210-230 (FITLPALLLLTFIVSGIFLFK). A CN hydrolase domain is found at 241 to 555 (LNVLIVQPDA…AEALSETIDV (315 aa)). Glu293 (proton acceptor) is an active-site residue. The active site involves Lys372. The active-site Nucleophile is the Cys463. Residues 569-589 (LIPWLMLFLTGIYYLNLLIGI) form a helical membrane-spanning segment.

This sequence belongs to the CN hydrolase family. Apolipoprotein N-acyltransferase subfamily.

It localises to the cell inner membrane. It carries out the reaction N-terminal S-1,2-diacyl-sn-glyceryl-L-cysteinyl-[lipoprotein] + a glycerophospholipid = N-acyl-S-1,2-diacyl-sn-glyceryl-L-cysteinyl-[lipoprotein] + a 2-acyl-sn-glycero-3-phospholipid + H(+). Its pathway is protein modification; lipoprotein biosynthesis (N-acyl transfer). Catalyzes the phospholipid dependent N-acylation of the N-terminal cysteine of apolipoprotein, the last step in lipoprotein maturation. The protein is Apolipoprotein N-acyltransferase 2 of Leptospira interrogans serogroup Icterohaemorrhagiae serovar copenhageni (strain Fiocruz L1-130).